Here is an 874-residue protein sequence, read N- to C-terminus: Alanine--tRNA ligase (874 aa).

Zn(2+) contacts are provided by histidine 562, histidine 566, cysteine 665, and histidine 669.

The protein belongs to the class-II aminoacyl-tRNA synthetase family. Zn(2+) serves as cofactor.

It is found in the cytoplasm. The enzyme catalyses tRNA(Ala) + L-alanine + ATP = L-alanyl-tRNA(Ala) + AMP + diphosphate. Catalyzes the attachment of alanine to tRNA(Ala) in a two-step reaction: alanine is first activated by ATP to form Ala-AMP and then transferred to the acceptor end of tRNA(Ala). Also edits incorrectly charged Ser-tRNA(Ala) and Gly-tRNA(Ala) via its editing domain. The polypeptide is Alanine--tRNA ligase (Pseudomonas fluorescens (strain ATCC BAA-477 / NRRL B-23932 / Pf-5)).